We begin with the raw amino-acid sequence, 608 residues long: MECPEPSESVIPNDQSTKSCSIKLQPMNRFRDMSKLRNYEIIQKLGQGTFGVVQKARNIKTKELVALKQLINHSAKEGFPITAMREITILKKLNHKNILKIIDMIYEEPKISNPQDILHQRGCFYTVSPYMCSDLVGLLENPNINLEVSHIKCFMEQLLHGIQYIHEQMFLHRDIKAANILIDRNGTLKIADFGLARVYHGSPPKFMSGPGGGERAYTGLVVTRWYRPPELLLGERRYTTAVDMWGIGCVFGELFTRKPILVGKTDSHQAQLIFDLVGPPNSISWSEATSLPNKHDLNIGLTCQRSLESKFAPLMNPDGINLLSGLLTLDPYKRFNALDALNHNYFKNEPLPMKPQELPKFEECHEIDKERFKLLREKKNNIHEANKIPKAHFPKGPGEYNNSNNYPRNRNGSFPLALPKQPKFYNQHQQEAHVPQQMHTDTYIPKKRDDKPGANAPQKESSEPITSYQSLRDRSPRREGHISRKPSTTNSNNISSNSSASNVGGTLSNPTHQKNRPNAKASAGIFMTNSRKQRPKPNPQSSSRNVSDQFKKRKLLPDEQNESDLTDFDEDVKDSKQLDSFLDWDTFTRSPENRKLQHEKKQFETKYS.

The Protein kinase domain occupies 39–346 (YEIIQKLGQG…ALDALNHNYF (308 aa)). Residues 45–53 (LGQGTFGVV) and Lys68 contribute to the ATP site. Asp174 acts as the Proton acceptor in catalysis. Disordered stretches follow at residues 383 to 419 (HEAN…LALP) and 443 to 571 (YIPK…FDED). Positions 400 to 411 (YNNSNNYPRNRN) are enriched in low complexity. The span at 471 to 482 (LRDRSPRREGHI) shows a compositional bias: basic and acidic residues. Residues 487 to 502 (STTNSNNISSNSSASN) are compositionally biased toward low complexity. Composition is skewed to polar residues over residues 503 to 512 (VGGTLSNPTH) and 539 to 548 (PQSSSRNVSD). Residues 559–571 (EQNESDLTDFDED) show a composition bias toward acidic residues.

This sequence belongs to the protein kinase superfamily. CMGC Ser/Thr protein kinase family. CDC2/CDKX subfamily.

Its subcellular location is the nucleus. It carries out the reaction L-seryl-[protein] + ATP = O-phospho-L-seryl-[protein] + ADP + H(+). The enzyme catalyses L-threonyl-[protein] + ATP = O-phospho-L-threonyl-[protein] + ADP + H(+). The catalysed reaction is [DNA-directed RNA polymerase] + ATP = phospho-[DNA-directed RNA polymerase] + ADP + H(+). In terms of biological role, serine/threonine-protein kinase involved in transcription regulation. Phosphorylates the UBC2/RAD6 ubiquitin-conjugating enzyme (E2), leading to monoubiquitination of histone H2B and the silencing of telomeric-associated genes. Also required for histone H3 methylation. Necessary for the recovery from pheromone-induced growth arrest in the cell cycle G1 phase. This is Serine/threonine-protein kinase BUR1 (BUR1) from Debaryomyces hansenii (strain ATCC 36239 / CBS 767 / BCRC 21394 / JCM 1990 / NBRC 0083 / IGC 2968) (Yeast).